The following is a 449-amino-acid chain: Trigger factor (449 aa).

The PPIase FKBP-type domain maps to 173 to 258 (GDRVTVDFVG…LKKVEWPHLP (86 aa)).

It belongs to the FKBP-type PPIase family. Tig subfamily.

The protein localises to the cytoplasm. The catalysed reaction is [protein]-peptidylproline (omega=180) = [protein]-peptidylproline (omega=0). Its function is as follows. Involved in protein export. Acts as a chaperone by maintaining the newly synthesized protein in an open conformation. Functions as a peptidyl-prolyl cis-trans isomerase. The sequence is that of Trigger factor from Burkholderia mallei (strain NCTC 10229).